Here is a 776-residue protein sequence, read N- to C-terminus: Zinc finger CCCH-type antiviral protein 1 (776 aa).

A2 carries the N-acetylalanine modification. Residues A2–L254 form an N-terminal domain region. Residues R69 to K76 carry the Nuclear localization signal motif. 4 C3H1-type zinc fingers span residues C73–H86, C88–H110, C150–H172, and E169–L193. Positions N221–S249 are disordered. The segment at A224 to L254 is binding to EXOSC5. Phosphoserine; by GSK3-beta occurs at positions 257, 262, 266, and 270. S274 carries the post-translational modification Phosphoserine. T278 carries the post-translational modification Phosphothreonine. S283 is modified (phosphoserine). Residues L284 to V291 carry the Nuclear export signal motif. A disordered region spans residues P308–V355. Residues G318–E327 are compositionally biased toward polar residues. S325, S351, and S398 each carry phosphoserine. Over residues D344–A353 the composition is skewed to low complexity. The Nuclear localization signal motif lies at K405 to K406. The tract at residues W457–S483 is disordered. Residues S459–S483 are compositionally biased toward polar residues. Residue Y501 is modified to Phosphotyrosine. The segment at L512–R562 is disordered. The span at Q523–G546 shows a compositional bias: low complexity. 2 positions are modified to phosphoserine: S544 and S667. The WWE domain maps to Y671 to R758.

Belongs to the ARTD/PARP family. Homodimer or homooligomer. Homooligomerization is essential for its antiviral activity. Interacts with EXOSC5. Interacts with EXOSC3, EXOSC7, DCP2 and DCP1A. Interacts with PARN in an RNA-independent manner. Interacts with XRN1 in an RNA-dependent manner. Interacts (via N-terminal domain) with DHX30 (via N-terminus) in an RNA-independent manner. Interacts (via N-terminal domain) with DDX17 in an RNA-independent manner. In terms of processing, phosphorylation at Ser-274 is essential for sequential phosphorylation of Ser-270, Ser-266, Ser-262 and Ser-257 by GSK3-beta. Phosphorylation by GSK3-beta enhances its antiviral activity. As to expression, expressed in the kidney and liver.

Its subcellular location is the cytoplasm. It localises to the nucleus. Its function is as follows. Antiviral protein which inhibits the replication of viruses by recruiting the cellular RNA degradation machineries to degrade the viral mRNAs. Binds to a ZAP-responsive element (ZRE) present in the target viral mRNA, recruits cellular poly(A)-specific ribonuclease PARN to remove the poly(A) tail, and the 3'-5' exoribonuclease complex exosome to degrade the RNA body from the 3'-end. It also recruits the decapping complex DCP1-DCP2 through RNA helicase p72 (DDX17) to remove the cap structure of the viral mRNA to initiate its degradation from the 5'-end. Its target viruses belong to families which include retroviridae: human immunodeficiency virus type 1 (HIV-1) and moloney and murine leukemia virus (MoMLV), filoviridae: ebola virus (EBOV) and marburg virus (MARV), togaviridae: sindbis virus (SINV) and Ross river virus (RRV). Specifically targets the multiply spliced but not unspliced or singly spliced HIV-1 mRNAs for degradation. The polypeptide is Zinc finger CCCH-type antiviral protein 1 (Zc3hav1) (Rattus norvegicus (Rat)).